The primary structure comprises 502 residues: MHIKPEEITSIIKNEIKNYEKELETVDSGTIIQIGDGVARVYGLEECMEGELLEFPNQVFGMALNLEQDNVGCVLLGSEEGIKEGDIVKRTGKIVEVPVGEDLIGRVVNSLGQPIDGKGPIKNDGYRAIEVPAPGILERSSVNEPLQTGIKAIDSMIPIGRGQRELIIGDRQTGKTAIAIDTIINQKGKDVICIYVAIGQKQSTVANIVNTLTEEGAMDYSIVVTASASESAPLQYIAPYSGCTMGEYFMNKGKHVLIIYDDLSKHAVAYRTMSLLIRRPPGREAYPGDVFYIHSRLLERAAKLSKENGGGSLTALPIIETLAGDVTAYIPTNVISITDGQIFLETELFNAGQRPAVNPGISVSRVGGNAQIKAMKQVSGTLRLELAQYRELASFAQFGSDLDKDTQARLEKGKRLIEILKQDQYKPMAVEKQIMIIYAAVNNFLLDIKVSDIKKFEKEFLEYMDTHHREIGKAILDKKVLDDELKSALESAIVEFKKIFLM.

ATP is bound at residue 169 to 176 (GDRQTGKT).

Belongs to the ATPase alpha/beta chains family. F-type ATPases have 2 components, CF(1) - the catalytic core - and CF(0) - the membrane proton channel. CF(1) has five subunits: alpha(3), beta(3), gamma(1), delta(1), epsilon(1). CF(0) has three main subunits: a(1), b(2) and c(9-12). The alpha and beta chains form an alternating ring which encloses part of the gamma chain. CF(1) is attached to CF(0) by a central stalk formed by the gamma and epsilon chains, while a peripheral stalk is formed by the delta and b chains.

The protein localises to the cell membrane. The catalysed reaction is ATP + H2O + 4 H(+)(in) = ADP + phosphate + 5 H(+)(out). Its function is as follows. Produces ATP from ADP in the presence of a proton gradient across the membrane. The alpha chain is a regulatory subunit. The protein is ATP synthase subunit alpha of Clostridium perfringens (strain SM101 / Type A).